The sequence spans 785 residues: MEKKVEAILEFDKIKKQLTEFASSSLGEQAILELAPATNFQVVQKSQLETEEGAKIIRLRGSAPITGLTDVFAHLKRLEIGGDLNGLEIYQIGSNLRVSRQMKNFMTDLLEMGVELPLLGALSDELLVLKEVEEDIAISVDESGKILDTASEALSTIRRTLRRTEDRVREKLESYLRDRNASKMLSDAVITIRNDRYVIPVKQEYKGHYGGIVHDQSASGQTLFIEPQSVVDLNNERKALQAKEKQEIERILAEISASLAGWINEIHHNTFILGRYDFIFAKARFGKAMKAVTPHLSDAGIVHLIAARHPLLDAANVVANDIYLGEDFTTIVITGPNTGGKTITLKTLGLLTLMAQSGLQIPAQEDSTIAVFEHVFADIGDEQSIEQSLSTFSSHMTNIVSILEKVNHKSLILYDELGAGTDPQEGAALAIAILDASHEKGASVVATTHYPELKAYGYNRVHATNASVEFNVETLSPTYKLLIGVPGRSNAFDISRRLGLSENIITEARSLVDTESADLNDMISSLEEKRNLAETEYEEARELARGADALLKDLQKEITNYYQQKDKLMEQAREKAANIVTKAEVEAEEIIHELRTMQLNGAAGIKEHELIDAKTRLGKAKPKTINKTIPQAPKQKPHVFQVGDNVRVLSLGQKGTLLNKISDKEWNVQIGIIKMKIKTTDLEYIQPETPKKQRIITSVHSSDSPVKSELDLRGERYEDALQKVDKYLDEALLAGYPQVAIIHGKGTGALRTGVTEYLKNHRMVKSIRFGAAAEGGNGVTIVEFK.

335-342 (GPNTGGKT) contributes to the ATP binding site. The region spanning 710-785 (LDLRGERYED…GNGVTIVEFK (76 aa)) is the Smr domain.

This sequence belongs to the DNA mismatch repair MutS family. MutS2 subfamily. As to quaternary structure, homodimer. Binds to stalled ribosomes, contacting rRNA.

Its function is as follows. Endonuclease that is involved in the suppression of homologous recombination and thus may have a key role in the control of bacterial genetic diversity. Acts as a ribosome collision sensor, splitting the ribosome into its 2 subunits. Detects stalled/collided 70S ribosomes which it binds and splits by an ATP-hydrolysis driven conformational change. Acts upstream of the ribosome quality control system (RQC), a ribosome-associated complex that mediates the extraction of incompletely synthesized nascent chains from stalled ribosomes and their subsequent degradation. Probably generates substrates for RQC. The sequence is that of Endonuclease MutS2 from Listeria welshimeri serovar 6b (strain ATCC 35897 / DSM 20650 / CCUG 15529 / CIP 8149 / NCTC 11857 / SLCC 5334 / V8).